The sequence spans 285 residues: Nucleotide-binding protein Gmet_1286 (285 aa).

8-15 (GLSGSGKS) serves as a coordination point for ATP. Residue 59–62 (DIRG) participates in GTP binding.

The protein belongs to the RapZ-like family.

In terms of biological role, displays ATPase and GTPase activities. In Geobacter metallireducens (strain ATCC 53774 / DSM 7210 / GS-15), this protein is Nucleotide-binding protein Gmet_1286.